Consider the following 104-residue polypeptide: Evasin P1174 (104 aa).

A signal peptide spans 1-27 (LKTFCLFLQIAVFIALGIQIFLCGTDA). 3 disulfide bridges follow: C40–C59, C44–C61, and C55–C72. Residues N43, N49, and N58 are each glycosylated (N-linked (GlcNAc...) asparagine). The segment at 85–104 (KPTSEEIADASPRPKETNSH) is disordered.

The protein resides in the secreted. Functionally, salivary chemokine-binding protein which binds to host chemokines CXCL1 and CXCL8. The chain is Evasin P1174 from Ixodes ricinus (Common tick).